The primary structure comprises 447 residues: uncharacterized protein (447 aa).

[4Fe-4S] cluster-binding residues include Cys-87, Cys-93, Cys-96, and Cys-162. 4 residues coordinate S-adenosyl-L-methionine: Gln-284, Tyr-313, Glu-334, and Asp-375. Cys-402 acts as the Nucleophile in catalysis.

This sequence belongs to the class I-like SAM-binding methyltransferase superfamily. RNA M5U methyltransferase family.

This is an uncharacterized protein from Nanoarchaeum equitans (strain Kin4-M).